Reading from the N-terminus, the 174-residue chain is Large ribosomal subunit protein uL18 (174 aa).

This sequence belongs to the universal ribosomal protein uL18 family. Part of the 50S ribosomal subunit. Contacts the 5S and 23S rRNAs.

This is one of the proteins that bind and probably mediate the attachment of the 5S RNA into the large ribosomal subunit, where it forms part of the central protuberance. This chain is Large ribosomal subunit protein uL18, found in Methanosarcina mazei (strain ATCC BAA-159 / DSM 3647 / Goe1 / Go1 / JCM 11833 / OCM 88) (Methanosarcina frisia).